The sequence spans 286 residues: 2,3,4,5-tetrahydropyridine-2,6-dicarboxylate N-succinyltransferase (286 aa).

Residues R111 and D148 each contribute to the substrate site.

The protein belongs to the transferase hexapeptide repeat family. Homotrimer.

The protein resides in the cytoplasm. It catalyses the reaction (S)-2,3,4,5-tetrahydrodipicolinate + succinyl-CoA + H2O = (S)-2-succinylamino-6-oxoheptanedioate + CoA. The protein operates within amino-acid biosynthesis; L-lysine biosynthesis via DAP pathway; LL-2,6-diaminopimelate from (S)-tetrahydrodipicolinate (succinylase route): step 1/3. The protein is 2,3,4,5-tetrahydropyridine-2,6-dicarboxylate N-succinyltransferase of Rhizobium etli (strain ATCC 51251 / DSM 11541 / JCM 21823 / NBRC 15573 / CFN 42).